We begin with the raw amino-acid sequence, 228 residues long: 2,3-bisphosphoglycerate-dependent phosphoglycerate mutase (228 aa).

Substrate contacts are provided by residues 8–15 (RHGLSEWN), 21–22 (TG), R60, 87–90 (ERHY), K98, 114–115 (RR), and 183–184 (GN). H9 functions as the Tele-phosphohistidine intermediate in the catalytic mechanism. The active-site Proton donor/acceptor is E87.

It belongs to the phosphoglycerate mutase family. BPG-dependent PGAM subfamily.

The catalysed reaction is (2R)-2-phosphoglycerate = (2R)-3-phosphoglycerate. It functions in the pathway carbohydrate degradation; glycolysis; pyruvate from D-glyceraldehyde 3-phosphate: step 3/5. Functionally, catalyzes the interconversion of 2-phosphoglycerate and 3-phosphoglycerate. The chain is 2,3-bisphosphoglycerate-dependent phosphoglycerate mutase from Enterococcus faecalis (strain ATCC 700802 / V583).